The following is an 89-amino-acid chain: Submaxillary mucin (89 aa).

Residues 1–89 are disordered; sequence AGSVGRTAGG…VGGSPVATTL (89 aa). O-linked (GalNAc...) serine; partial glycosylation is present at serine 3. Residues threonine 7 and threonine 14 are each glycosylated (O-linked (GalNAc...) threonine; partial). Serine 15 carries O-linked (GalNAc...) serine; partial glycosylation. An O-linked (GalNAc...) threonine; partial glycan is attached at threonine 23. An O-linked (GalNAc...) serine; partial glycan is attached at serine 25. An O-linked (GalNAc...) threonine; partial glycan is attached at threonine 27. O-linked (GalNAc...) serine; partial glycosylation is present at serine 29. Threonine 34 is a glycosylation site (O-linked (GalNAc...) threonine; partial). Serine 38 carries an O-linked (GalNAc...) serine; partial glycan. Threonine 42 is a glycosylation site (O-linked (GalNAc...) threonine; partial). 2 O-linked (GalNAc...) serine; partial glycosylation sites follow: serine 47 and serine 49. An O-linked (GalNAc...) threonine; partial glycan is attached at threonine 50. The O-linked (GalNAc...) serine; partial glycan is linked to serine 54. Positions 56-71 are enriched in low complexity; sequence APGTTLAGRAGTTLGP. O-linked (GalNAc...) threonine; partial glycosylation is found at threonine 59, threonine 60, threonine 67, and threonine 68. Residues serine 73 and serine 76 are each glycosylated (O-linked (GalNAc...) serine; partial). O-linked (GalNAc...) threonine; partial glycosylation is present at threonine 78. Serine 83 carries O-linked (GalNAc...) serine; partial glycosylation.

Heavily O-glycosylated at most but not all Ser and Thr residues. In terms of tissue distribution, expressed in the submaxillary salivary gland.

The protein localises to the secreted. This Canis lupus familiaris (Dog) protein is Submaxillary mucin.